The sequence spans 440 residues: Transposon Ty1-PR3 Gag polyprotein (440 aa).

Polar residues-rich tracts occupy residues 1–23 (MESQ…SVTS), 48–60 (TKAN…TPAS), and 127–152 (QSQF…GNTF). Disordered stretches follow at residues 1–93 (MESQ…MMTQ), 126–173 (PQSQ…RPPP), and 352–440 (GSRN…PGTY). A compositionally biased stretch (low complexity) spans 153 to 165 (TDSSSADSDMTST). The segment at 299–401 (NNGIHINNKV…NSKSKTARAH (103 aa)) is RNA-binding. The segment covering 402–418 (NVSTSNNSPSTDNDSIS) has biased composition (low complexity). The residue at position 416 (Ser416) is a Phosphoserine. The segment covering 419–428 (KSTTEPIQLN) has biased composition (polar residues). The span at 429-440 (NKHDLHLRPGTY) shows a compositional bias: basic and acidic residues.

In terms of assembly, homotrimer.

Its subcellular location is the cytoplasm. Capsid protein (CA) is the structural component of the virus-like particle (VLP), forming the shell that encapsulates the retrotransposons dimeric RNA genome. The particles are assembled from trimer-clustered units and there are holes in the capsid shells that allow for the diffusion of macromolecules. CA also has nucleocapsid-like chaperone activity, promoting primer tRNA(i)-Met annealing to the multipartite primer-binding site (PBS), dimerization of Ty1 RNA and initiation of reverse transcription. The polypeptide is Transposon Ty1-PR3 Gag polyprotein (TY1A-PR3) (Saccharomyces cerevisiae (strain ATCC 204508 / S288c) (Baker's yeast)).